Here is a 235-residue protein sequence, read N- to C-terminus: MAQTLNRSLTDLGALLHLVDPTLPIGGFNHSNGLETFVQQRVVESKATLEEYVQTQLLQNWIYNDGAYLSLAFDAMNEGNFDRLCELDWQLSATKVARESREGSFKLGVRLLKIFIRYETHTLLTAYQQAIAEKRVQGYFPIVFAMVAQAMGLTKADTLYAFYYNAAVGAITNGVKLIPLSQMDGQDILFDLRGSLVQAVELSLDPDEEWLGAATLANDIRAMQHEVLYTRLYMS.

It belongs to the UreF family. UreD, UreF and UreG form a complex that acts as a GTP-hydrolysis-dependent molecular chaperone, activating the urease apoprotein by helping to assemble the nickel containing metallocenter of UreC. The UreE protein probably delivers the nickel.

It localises to the cytoplasm. Required for maturation of urease via the functional incorporation of the urease nickel metallocenter. This chain is Urease accessory protein UreF, found in Haemophilus influenzae (strain PittEE).